The following is a 265-amino-acid chain: V0 assembly protein 1 (265 aa).

The signal sequence occupies residues 1–24 (MVFGQLYALFIFTLSCCISKTVQA). Residues 25 to 223 (DSSKESSSFI…ILSSIWTEGL (199 aa)) lie on the Vacuolar side of the membrane. Residues Asn-69, Asn-104, and Asn-172 are each glycosylated (N-linked (GlcNAc...) asparagine). The helical transmembrane segment at 224-244 (LMCLIVSALLLFILIVALSWI) threads the bilayer. Residues 245–265 (SNLDITYGALEKSTNPIKKNN) are Cytoplasmic-facing. The short motif at 262-265 (KKNN) is the ER retention motif element.

The protein belongs to the VOA1 family. As to quaternary structure, V-ATPase is a heteromultimeric enzyme composed of a peripheral catalytic V1 complex (components A to H) attached to an integral membrane V0 proton pore complex (components: a, c, c', c'', d, e, f and VOA1). Interacts with VMA21. Associates with the assembling V0 complex.

It is found in the vacuole membrane. The protein resides in the endoplasmic reticulum membrane. Accessory component of the V0 complex of vacuolar(H+)-ATPase (V-ATPase), a multisubunit enzyme composed of a peripheral complex (V1) that hydrolyzes ATP and a membrane integral complex (V0) that translocates protons. V-ATPase is responsible for acidifying and maintaining the pH of intracellular compartments. Functions with VMA21 in assembly of the V0 complex. This is V0 assembly protein 1 (VOA1) from Saccharomyces cerevisiae (strain ATCC 204508 / S288c) (Baker's yeast).